The primary structure comprises 274 residues: MAVRKLKPTTPGQRHKIIGTFEEITASVPEKSLVYGKKSSGGRNNEGKMTMRYIGGGHRKVIRIVDFKRNKDGVPAVVKTIEYDPNRSARIALLYYADGEKRYIIAPNGLQVGATLMSGETAAPEIGNTLPLQNIPVGTVIHNIELRPGQGAALVRSAGNFAQLTSREGKYCVIKLPSGEVRQILSTCKATIGSVGNSDHGLERSGKAGRSRWQGRRPRNRGVVMNPVDHPMGGGEGRSSGGHPRSRKGLYAKGLKTRAPKKQSSKYIIERRKK.

The disordered stretch occupies residues Val195–Lys274. Basic residues-rich tracts occupy residues Lys207–Asn220 and Pro244–Ser264.

This sequence belongs to the universal ribosomal protein uL2 family. Part of the 50S ribosomal subunit. Forms a bridge to the 30S subunit in the 70S ribosome.

Its function is as follows. One of the primary rRNA binding proteins. Required for association of the 30S and 50S subunits to form the 70S ribosome, for tRNA binding and peptide bond formation. It has been suggested to have peptidyltransferase activity; this is somewhat controversial. Makes several contacts with the 16S rRNA in the 70S ribosome. In Bacteroides thetaiotaomicron (strain ATCC 29148 / DSM 2079 / JCM 5827 / CCUG 10774 / NCTC 10582 / VPI-5482 / E50), this protein is Large ribosomal subunit protein uL2.